A 249-amino-acid chain; its full sequence is Probable transcriptional regulatory protein AB57_1731 (249 aa).

This sequence belongs to the TACO1 family.

The protein localises to the cytoplasm. This Acinetobacter baumannii (strain AB0057) protein is Probable transcriptional regulatory protein AB57_1731.